A 284-amino-acid chain; its full sequence is D-tagatose-1,6-bisphosphate aldolase subunit GatY (284 aa).

Residue aspartate 82 is the Proton donor of the active site. The Zn(2+) site is built by histidine 83 and histidine 180. Position 181 (glycine 181) interacts with dihydroxyacetone phosphate. Histidine 208 contributes to the Zn(2+) binding site. Dihydroxyacetone phosphate contacts are provided by residues 209–211 (GAS) and 230–233 (NVAT).

The protein belongs to the class II fructose-bisphosphate aldolase family. TagBP aldolase GatY subfamily. As to quaternary structure, forms a complex with GatZ. The cofactor is Zn(2+).

It carries out the reaction D-tagatofuranose 1,6-bisphosphate = D-glyceraldehyde 3-phosphate + dihydroxyacetone phosphate. It participates in carbohydrate metabolism; D-tagatose 6-phosphate degradation; D-glyceraldehyde 3-phosphate and glycerone phosphate from D-tagatose 6-phosphate: step 2/2. In terms of biological role, catalytic subunit of the tagatose-1,6-bisphosphate aldolase GatYZ, which catalyzes the reversible aldol condensation of dihydroxyacetone phosphate (DHAP or glycerone-phosphate) with glyceraldehyde 3-phosphate (G3P) to produce tagatose 1,6-bisphosphate (TBP). Requires GatZ subunit for full activity and stability. Is involved in the catabolism of galactitol. The protein is D-tagatose-1,6-bisphosphate aldolase subunit GatY of Escherichia coli O8 (strain IAI1).